The following is a 2013-amino-acid chain: Cell adhesion molecule DSCAM (2013 aa).

An N-terminal signal peptide occupies residues 1–17 (MWILALSLFQSFANVFS). At 19–1594 (EPHSSLYFVN…EGLTTNEGLK (1576 aa)) the chain is on the extracellular side. 9 consecutive Ig-like C2-type domains span residues 20–119 (PHSS…VHIK), 125–216 (PYTV…ARLF), 225–305 (PSIL…AKVI), 313–401 (PLKA…VQVV), 407–500 (PKII…ARIN), 504–592 (PASI…VHVT), 596–685 (PPFI…SQLI), 690–783 (PKFV…MYLT), and 787–883 (PAMI…LTVQ). Cystine bridges form between cysteine 46–cysteine 102, cysteine 145–cysteine 197, cysteine 246–cysteine 293, cysteine 335–cysteine 385, cysteine 428–cysteine 484, cysteine 525–cysteine 575, cysteine 617–cysteine 669, cysteine 711–cysteine 766, and cysteine 809–cysteine 865. N-linked (GlcNAc...) asparagine glycosylation is present at asparagine 78. Asparagine 470 carries an N-linked (GlcNAc...) asparagine glycan. Asparagine 666 is a glycosylation site (N-linked (GlcNAc...) asparagine). 4 consecutive Fibronectin type-III domains span residues 885 to 982 (PPDP…ADEA), 987 to 1086 (PPQE…TLED), 1091 to 1187 (PPEN…TKED), and 1191 to 1285 (PPAG…AKAP). N-linked (GlcNAc...) asparagine glycans are attached at residues asparagine 1160 and asparagine 1250. Residues 1285–1377 (PARILTFSGT…DEIILNLQVQ (93 aa)) form the Ig-like C2-type 10 domain. An intrachain disulfide couples cysteine 1307 to cysteine 1359. Fibronectin type-III domains are found at residues 1379–1473 (PPDQ…TLGK) and 1474–1575 (EPQF…TIPP). A helical transmembrane segment spans residues 1595 to 1615 (ILVTISCILVGVLLLFVLLLV). Residues 1616-2013 (VRRRRREQRL…NPYAKSYTLV (398 aa)) are Cytoplasmic-facing. Residues 1616-2013 (VRRRRREQRL…NPYAKSYTLV (398 aa)) are required for netrin-mediated axon repulsion of neuronal growth cones. Disordered regions lie at residues 1718-1809 (LVDV…SASS) and 1920-2013 (RDLS…YTLV). Residues 1799–1809 (SSMVSTESASS) are compositionally biased toward low complexity. Residues 1949–1968 (EASSSTSSTREGQQSWQQGA) are compositionally biased toward polar residues.

Homodimer; mediates homophilic interactions to promote cell adhesion. Interacts with DCC; the interaction is abolished in response to NTN1. Interacts (via extracellular domain) with NTN1. Interacts (via extracellular domain) with UNC5C (via Ig-like C2-type domain). Interacts with PTK2. Interacts with FYN. In terms of processing, phosphorylated at tyrosine residues. Phosphorylation is enhanced by NTN1.

It localises to the cell membrane. The protein resides in the cell projection. Its subcellular location is the axon. The protein localises to the dendrite. It is found in the growth cone. It localises to the synapse. Its function is as follows. Cell adhesion molecule that plays a role in neuronal self-avoidance. Promotes repulsion between specific neuronal processes of either the same cell or the same subtype of cells. Mediates within retinal amacrine and ganglion cell subtypes both isoneuronal self-avoidance for creating an orderly dendritic arborization and heteroneuronal self-avoidance to maintain the mosaic spacing between amacrine and ganglion cell bodies. Receptor for netrin required for axon guidance independently of and in collaboration with the receptor DCC. Might also collaborate with UNC5C in NTN1-mediated axon repulsion independently of DCC. In spinal cord development plays a role in guiding commissural axons projection and pathfinding across the ventral midline to reach the floor plate upon ligand binding. Mediates intracellular signaling by stimulating the activation of MAPK8 and MAP kinase p38. Adhesion molecule that promotes lamina-specific synaptic connections in the retina: expressed in specific subsets of interneurons and retinal ganglion cells (RGCs) and promotes synaptic connectivity via homophilic interactions. This chain is Cell adhesion molecule DSCAM (Dscam), found in Rattus norvegicus (Rat).